A 268-amino-acid chain; its full sequence is Purine nucleoside phosphorylase (268 aa).

Residues Ser36, His68, 88-90 (RIH), and Ala120 contribute to the phosphate site. Glu189 is a binding site for a purine D-ribonucleoside. Residue Ser208 participates in phosphate binding. Asn231 contributes to the a purine D-ribonucleoside binding site.

It belongs to the PNP/MTAP phosphorylase family. As to quaternary structure, homotrimer.

It carries out the reaction a purine 2'-deoxy-D-ribonucleoside + phosphate = a purine nucleobase + 2-deoxy-alpha-D-ribose 1-phosphate. The protein operates within purine metabolism; purine nucleoside salvage. Functionally, the purine nucleoside phosphorylases catalyze the phosphorolytic breakdown of the N-glycosidic bond in the beta-(deoxy)ribonucleoside molecules, with the formation of the corresponding free purine bases and pentose-1-phosphate. Cleaves guanosine, inosine, 2'-deoxyguanosine and 2'-deoxyinosine. The protein is Purine nucleoside phosphorylase (punA) of Mycobacterium leprae (strain TN).